The primary structure comprises 420 residues: Protein disulfide isomerase CRELD1 (420 aa).

Residues 1–29 form the signal peptide; sequence MAPRSSRGIAPAMLCGLSLFLGFPGLVWV. Residues 30–362 are Extracellular-facing; sequence QISVPPQSSP…GFFSEMTEDE (333 aa). The CXXC signature appears at 46–49; that stretch reads CHTC. Intrachain disulfides connect Cys-46/Cys-49, Cys-155/Cys-169, Cys-163/Cys-181, and Cys-183/Cys-192. The EGF-like 1 domain occupies 153 to 193; the sequence is LPCPGGAERPCGGYGHCEGEGTRGGSGHCDCQAGYGGEACG. N-linked (GlcNAc...) asparagine glycosylation is present at Asn-205. FU repeat units follow at residues 208–255 and 268–315; these read HLVC…ERAS and SYEC…AVCP. The short motif at 278–281 is the CXXC element; sequence CLGC. Disulfide bonds link Cys-278-Cys-281, Cys-309-Cys-321, Cys-314-Cys-330, and Cys-332-Cys-343. In terms of domain architecture, EGF-like 2; calcium-binding spans 305–344; that stretch reads DVDECETAVCPGENQQCENTEGSYRCICADGYKQMEGICV. A helical membrane pass occupies residues 363-383; it reads LVVLQQMFFGVIICALATLAA. Position 384 (Lys-384) is a topological domain, cytoplasmic. The helical transmembrane segment at 385–405 threads the bilayer; the sequence is GDLVFTAIFIGAVAAMTGYWL. The Extracellular portion of the chain corresponds to 406–420; that stretch reads SERSDRVLEGFIKGR.

It belongs to the CRELD family.

It is found in the membrane. It catalyses the reaction Catalyzes the rearrangement of -S-S- bonds in proteins.. Its function is as follows. Protein disulfide isomerase. Promotes the localization of acetylcholine receptors (AChRs) to the plasma membrane. The polypeptide is Protein disulfide isomerase CRELD1 (CRELD1) (Bos taurus (Bovine)).